The following is a 465-amino-acid chain: Phospholipase A1-II 5 (465 aa).

Residue S233 is the Acyl-ester intermediate of the active site. Residues S233, D297, and H336 each act as charge relay system in the active site.

It belongs to the AB hydrolase superfamily. Lipase family.

The protein resides in the cytoplasm. Functionally, acylhydrolase that catalyzes the hydrolysis of phospholipids at the sn-1 position. The sequence is that of Phospholipase A1-II 5 from Oryza sativa subsp. japonica (Rice).